Reading from the N-terminus, the 395-residue chain is uncharacterized protein (395 aa).

It belongs to the UDP-glycosyltransferase family.

This is an uncharacterized protein from Bacillus subtilis (strain 168).